Reading from the N-terminus, the 298-residue chain is DDRGK domain-containing protein 1 (298 aa).

Residues 1-21 (MDIVLYFVAVPILIVLIVSAV) form a helical membrane-spanning segment. Topologically, residues 22 to 298 (KVRGKTEEDN…NLIPEIHNTA (277 aa)) are cytoplasmic. Residues 71-149 (NSAYREAADN…EERRKEDKKE (79 aa)) are disordered. The span at 82–94 (SPVEVEEEYEEAE) shows a compositional bias: acidic residues. Positions 110–149 (KLEEKQAKRAQREAELEEREERKRTQELREEERRKEDKKE) are enriched in basic and acidic residues. Residues 181–195 (SFVVEEQGEADELTE) carry the UFM1-interacting motif (UFIM) motif. The PCI domain occupies 215 to 259 (VLLEDLASHFGLRTQDAISRLQDLLSDGSITGVIDDRGKFIFITP).

The protein belongs to the DDRGK1 family. In terms of assembly, component of the UFM1 ribosome E3 ligase (UREL) complex, composed of ufl1, ddrgk1 and cdk5rap3.

It localises to the endoplasmic reticulum membrane. In terms of biological role, component of the UFM1 ribosome E3 ligase (UREL) complex, a multiprotein complex that catalyzes ufmylation of endoplasmic reticulum-docked proteins. The UREL complex plays a key role in ribosome recycling by mediating mono-ufmylation of the RPL26/uL24 subunit of the 60S ribosome following ribosome dissociation: ufmylation weakens the junction between post-termination 60S subunits and SEC61 translocons, promoting release and recycling of the large ribosomal subunit from the endoplasmic reticulum membrane. Ufmylation of RPL26/uL24 and subsequent 60S ribosome recycling either take place after normal termination of translation or after ribosome stalling during cotranslational translocation at the endoplasmic reticulum. Within the UREL complex, DDRGK1 tethers the complex to the endoplasmic reticulum membrane to restrict its activity to endoplasmic reticulum-docked ribosomes and acts as an ufmylation 'reader': following RPL26/uL24 ufmylation, DDRGK1 specifically binds to ufmylated RPL26/uL24 via its UFIM motif, resulting in stable association between the 60S ribosome and the UREL complex, followed by dissociation of the 60S ribosome subunit from the endoplasmic reticulum membrane. The UREL complex is also involved in reticulophagy in response to endoplasmic reticulum stress by promoting ufmylation of proteins such as CYB5R3 and RPN1, thereby promoting lysosomal degradation of ufmylated proteins. Required for stabilization and ufmylation of ATG9A. This is DDRGK domain-containing protein 1 from Osmerus mordax (Rainbow smelt).